A 123-amino-acid polypeptide reads, in one-letter code: Small ribosomal subunit protein bS6 (123 aa).

A disordered region spans residues 102–123 (MLKQKEERAPRREAEAKEFAAE). Residues 104 to 123 (KQKEERAPRREAEAKEFAAE) show a composition bias toward basic and acidic residues.

This sequence belongs to the bacterial ribosomal protein bS6 family.

In terms of biological role, binds together with bS18 to 16S ribosomal RNA. In Vibrio vulnificus (strain CMCP6), this protein is Small ribosomal subunit protein bS6.